Consider the following 436-residue polypeptide: CaM kinase-like vesicle-associated protein (436 aa).

Positions 24–286 (YDLGQIVKSE…AQEAINHEWI (263 aa)) constitute a Protein kinase domain. The disordered stretch occupies residues 328–436 (APENQTAAAT…ALDTVEEQSG (109 aa)). Residues 333–409 (TAAATAPAAE…QPPAEPVVHV (77 aa)) show a composition bias toward low complexity.

It belongs to the protein kinase superfamily. CAMK Ser/Thr protein kinase family. Interacts with calmodulin, in the presence of calcium. Ca(2+) serves as cofactor.

It localises to the cytoplasmic vesicle membrane. Functionally, does not appear to have detectable kinase activity. The chain is CaM kinase-like vesicle-associated protein (camkv) from Danio rerio (Zebrafish).